The following is a 98-amino-acid chain: NADH-ubiquinone oxidoreductase chain 4L (98 aa).

The next 3 membrane-spanning stretches (helical) occupy residues 1-21 (MSLV…GLLM), 29-49 (SLLC…LTIL), and 61-81 (IILL…LVMV).

This sequence belongs to the complex I subunit 4L family. As to quaternary structure, core subunit of respiratory chain NADH dehydrogenase (Complex I) which is composed of 45 different subunits.

The protein resides in the mitochondrion inner membrane. The catalysed reaction is a ubiquinone + NADH + 5 H(+)(in) = a ubiquinol + NAD(+) + 4 H(+)(out). Core subunit of the mitochondrial membrane respiratory chain NADH dehydrogenase (Complex I) which catalyzes electron transfer from NADH through the respiratory chain, using ubiquinone as an electron acceptor. Part of the enzyme membrane arm which is embedded in the lipid bilayer and involved in proton translocation. The polypeptide is NADH-ubiquinone oxidoreductase chain 4L (MT-ND4L) (Muntiacus vuquangensis (Giant muntjac)).